Reading from the N-terminus, the 280-residue chain is Acetylglutamate kinase (280 aa).

Substrate contacts are provided by residues 64-65 (GG), Arg-86, and Asn-179.

This sequence belongs to the acetylglutamate kinase family. ArgB subfamily.

The protein localises to the cytoplasm. It carries out the reaction N-acetyl-L-glutamate + ATP = N-acetyl-L-glutamyl 5-phosphate + ADP. The protein operates within amino-acid biosynthesis; L-arginine biosynthesis; N(2)-acetyl-L-ornithine from L-glutamate: step 2/4. In terms of biological role, catalyzes the ATP-dependent phosphorylation of N-acetyl-L-glutamate. The chain is Acetylglutamate kinase from Campylobacter fetus subsp. fetus (strain 82-40).